The following is a 230-amino-acid chain: Large ribosomal subunit protein uL1 (230 aa).

This sequence belongs to the universal ribosomal protein uL1 family. Part of the 50S ribosomal subunit.

Its function is as follows. Binds directly to 23S rRNA. The L1 stalk is quite mobile in the ribosome, and is involved in E site tRNA release. Protein L1 is also a translational repressor protein, it controls the translation of the L11 operon by binding to its mRNA. In Onion yellows phytoplasma (strain OY-M), this protein is Large ribosomal subunit protein uL1.